Reading from the N-terminus, the 669-residue chain is Dymeclin (669 aa).

Gly2 carries N-myristoyl glycine lipidation.

The protein belongs to the dymeclin family. As to quaternary structure, interacts with GOLM1 and PPIB. In terms of processing, myristoylated in vitro; myristoylation is not essential for protein targeting to Golgi compartment.

Its subcellular location is the cytoplasm. It localises to the golgi apparatus. It is found in the membrane. In terms of biological role, necessary for correct organization of Golgi apparatus. Involved in bone development. This chain is Dymeclin (DYM), found in Pongo abelii (Sumatran orangutan).